Here is a 271-residue protein sequence, read N- to C-terminus: MGLAATRTKQRFGLDPRNTAWSNDTSRFGHQFLEKFGWKPGMGLGLYPMNSNTSHIKVSIKDDNVGLGAKLKRKDKKDEFDNGECAGLDVFQRILGRLNGKESKISEELDTQRKQKIIDGKWGIHFVKGEVLASTWDPKTHKLRNYSNAKKRKREGDDSEDEDDDDKEDKDSDKKKHKKHKKHKKDKKKDKKDKKEHKKHKKEEKRLKKEKRAEKTKETKKTSKLKSSESASNIPDAVNTRLSVRSKWIKQKRAALMDSKALNEIFMITND.

The 48-residue stretch at 25 to 72 folds into the G-patch domain; that stretch reads TSRFGHQFLEKFGWKPGMGLGLYPMNSNTSHIKVSIKDDNVGLGAKLK. The disordered stretch occupies residues 147–239; that stretch reads SNAKKRKREG…SASNIPDAVN (93 aa). A compositionally biased stretch (acidic residues) spans 157 to 168; it reads DDSEDEDDDDKE. A compositionally biased stretch (basic residues) spans 175-203; it reads KKHKKHKKHKKDKKKDKKDKKEHKKHKKE. Residues 204–221 are compositionally biased toward basic and acidic residues; the sequence is EKRLKKEKRAEKTKETKK. Residue serine 230 is modified to Phosphoserine.

The protein belongs to the PINX1 family. As to quaternary structure, interacts with EST2.

It localises to the nucleus. It is found in the nucleolus. Involved in rRNA-processing at A0, A1 and A2 sites through its action in U18 and U24 snoRNA 3'-end final trimming. Negative regulator of telomerase throughX competition for binding to EST2 with TLC1. This chain is Protein PXR1 (PXR1), found in Saccharomyces cerevisiae (strain YJM789) (Baker's yeast).